Consider the following 87-residue polypeptide: Small ribosomal subunit protein bS20 (87 aa).

It belongs to the bacterial ribosomal protein bS20 family.

In terms of biological role, binds directly to 16S ribosomal RNA. The polypeptide is Small ribosomal subunit protein bS20 (Corynebacterium jeikeium (strain K411)).